Consider the following 594-residue polypeptide: Sodium-dependent glucose transporter 1 (594 aa).

11 helical membrane passes run 77-97, 115-137, 144-161, 166-186, 205-225, 269-289, 311-331, 349-371, 393-413, 439-459, and 467-487; these read WLVSLALCASFLGLGMAISVL, LSYIFVGRASGYIGGSLLGGILF, LLLGFALLTTAFGMSGTP, AWVLTVLMSSVGVSMGVLDTG, ALHFSFAAGAFASPIIAKLLF, IVIGAFVLLVSLLFFSLYFCI, TLIILLSMFFFFYVGSEVAYG, AAGLNSLFWGAFAAGRGLAIFFA, LLCLFSQNYPMLWACTALYGI, IFVVGAALGEMVLPALLGFLL, and LLMYLTLCTATFTSILFPVLY.

Belongs to the major facilitator superfamily.

The protein localises to the apical cell membrane. Functionally, may function as a sodium-dependent glucose transporter. Potential channels for urea in the inner medulla of kidney. The protein is Sodium-dependent glucose transporter 1 (mfsd4b) of Danio rerio (Zebrafish).